The primary structure comprises 181 residues: uncharacterized protein (181 aa).

This is an uncharacterized protein from Enterobacteria phage T4 (Bacteriophage T4).